Here is a 1528-residue protein sequence, read N- to C-terminus: Cell surface antigen I/II (1528 aa).

The first 50 residues, 1 to 50 (MLQKCKLEGIIICNEKRLLGAAKVKSGRTLSGALLGTAILASGAGQKALA), serve as a signal peptide directing secretion. Residues 50–156 (AEETSTTSTS…PEIKDDYSKQ (107 aa)) are disordered. A compositionally biased stretch (low complexity) spans 51–68 (EETSTTSTSGGDTAVVGT). Polar residues-rich tracts occupy residues 83–97 (NPSS…QARQ) and 124–133 (TVSQDATVNK). Residues 142–154 (ANQKEPEIKDDYS) are compositionally biased toward basic and acidic residues. 4 Ag I/II A repeats span residues 161 to 235 (QKAT…QQAN), 236 to 315 (SDSQ…QAGN), 316 to 396 (AANE…QSGN), and 397 to 478 (AANE…KKDL). 2 disordered regions span residues 840–951 (VPKV…VEPV) and 1459–1480 (SNTV…PKTT). Basic and acidic residues predominate over residues 855–879 (TKPDEPTYEVEKELVDLPVEPKYEP). Polar residues predominate over residues 1459–1468 (SNTVRTSTPE). The LPXTG sorting signal signature appears at 1503–1507 (LPATG). Pentaglycyl murein peptidoglycan amidated threonine is present on T1506. Positions 1507 to 1528 (GDSSNAYLPLLGLVSLTAGFSC) are cleaved as a propeptide — removed by sortase.

The protein belongs to the antigen I/II family.

The protein resides in the secreted. Its subcellular location is the cell wall. The polypeptide is Cell surface antigen I/II (Streptococcus downei (Streptococcus sobrinus)).